We begin with the raw amino-acid sequence, 572 residues long: MRTSQYMLSTLKETPADAEVISHQLMLRAGMIRKLASGLYTWLPTGLRVLRKVENIVREEMNNAGAIEVSMPVVQPADLWVESGRWDQYGPELLRFVDRGERPFVLGPTHEEVITDLIRNEVSSYKQLPLNFFQIQTKFRDEVRPRFGVMRSREFLMKDAYSFHTSQESLQATYDTMYAAYSKIFSRMDLDFRAVQADTGSIGGNASHEFQVLASSGEDDIVFSTESDYAANIELAEAVAPKLGRAEAKEELRLIDTPNAKTIAELVEQFKLPVEKTVKTLLVKATEESGHQLVALLVRGDHELNEIKAEKIAQVASPLTFATEEEIRAIIGAGPGSLGPVKLDIPVVVDRTVAAMSDFSAGANIDGKHYFGINWVRDVALPQVADIRNVVEGDISPDGKGTLQIKRGIEVGHIFQLGSKYSEALKATVQGEDGRNQTLTMGCYGIGVTRVVAAAIEQNNDERGIIWPDAIAPFHVAILPMNMHKSFRVKEVAEDIYQQLRAKGIEVLLDDRKERPGVMFADMELIGVPHTIVIGDRNLDSEEIEYKNRRVGEKQMIKTSEIIDFLLANIIR.

The protein belongs to the class-II aminoacyl-tRNA synthetase family. ProS type 1 subfamily. As to quaternary structure, homodimer.

It localises to the cytoplasm. The catalysed reaction is tRNA(Pro) + L-proline + ATP = L-prolyl-tRNA(Pro) + AMP + diphosphate. Its function is as follows. Catalyzes the attachment of proline to tRNA(Pro) in a two-step reaction: proline is first activated by ATP to form Pro-AMP and then transferred to the acceptor end of tRNA(Pro). As ProRS can inadvertently accommodate and process non-cognate amino acids such as alanine and cysteine, to avoid such errors it has two additional distinct editing activities against alanine. One activity is designated as 'pretransfer' editing and involves the tRNA(Pro)-independent hydrolysis of activated Ala-AMP. The other activity is designated 'posttransfer' editing and involves deacylation of mischarged Ala-tRNA(Pro). The misacylated Cys-tRNA(Pro) is not edited by ProRS. The chain is Proline--tRNA ligase from Pectobacterium atrosepticum (strain SCRI 1043 / ATCC BAA-672) (Erwinia carotovora subsp. atroseptica).